Here is a 319-residue protein sequence, read N- to C-terminus: Mas-related G-protein coupled receptor member D (319 aa).

The Extracellular portion of the chain corresponds to 1–30 (MNYTPYSSPAPGLTISPTMDPVTWVYFSVT). A helical transmembrane segment spans residues 31-51 (FLAMATCVCGIVGNSMVIWLL). Over 52–64 (SFHRVQRSPFCTY) the chain is Cytoplasmic. The chain crosses the membrane as a helical span at residues 65-85 (VLNLAVADLLFLLCMASLLSL). At 86–92 (ETGPLLT) the chain is on the extracellular side. Residues 93–113 (ASTSARVYEGMKRIKYFAYTA) traverse the membrane as a helical segment. Over 114–144 (GLSLLTAISTQRCLSVLFPIWYKCHRPQHLS) the chain is Cytoplasmic. Residues 145–165 (GVVCGVLWALALLMNFLASFF) traverse the membrane as a helical segment. Over 166-184 (CVQFWHPDKYQCFKVDMVF) the chain is Extracellular. Residues 185–205 (NSLILGIFMPVMVLTSAIIFI) traverse the membrane as a helical segment. The Cytoplasmic portion of the chain corresponds to 206 to 220 (RMRKNSLLQRRQPRR). Residues 221 to 241 (LYVVILTSVLVFLTCSLPLGI) form a helical membrane-spanning segment. At 242–260 (NWFLLYWVELPQAVRLLYV) the chain is on the extracellular side. A helical transmembrane segment spans residues 261–281 (CSSRFSSSLSSSANPVIYFLV). Residues 282–319 (GSQKSHRLQESLGAVLGRALQDEPEGRETPSTCTNDGV) lie on the Cytoplasmic side of the membrane.

This sequence belongs to the G-protein coupled receptor 1 family. Mas subfamily. In terms of tissue distribution, co-expressed in the small diameter neurons with P2X3 and VR1 in dorsal root ganglia.

It is found in the cell membrane. Its function is as follows. May regulate nociceptor function and/or development, including the sensation or modulation of pain. Functions as a specific membrane receptor for beta-alanine. The receptor couples with G-protein G(q) and G(i). In Rattus norvegicus (Rat), this protein is Mas-related G-protein coupled receptor member D (Mrgprd).